The following is a 190-amino-acid chain: Imidazoleglycerol-phosphate dehydratase (190 aa).

Belongs to the imidazoleglycerol-phosphate dehydratase family.

The protein localises to the cytoplasm. The catalysed reaction is D-erythro-1-(imidazol-4-yl)glycerol 3-phosphate = 3-(imidazol-4-yl)-2-oxopropyl phosphate + H2O. It participates in amino-acid biosynthesis; L-histidine biosynthesis; L-histidine from 5-phospho-alpha-D-ribose 1-diphosphate: step 6/9. This Methanococcus maripaludis (strain DSM 14266 / JCM 13030 / NBRC 101832 / S2 / LL) protein is Imidazoleglycerol-phosphate dehydratase.